Here is a 122-residue protein sequence, read N- to C-terminus: UPF0231 protein VSAL_I2591 (122 aa).

It belongs to the UPF0231 family.

This Aliivibrio salmonicida (strain LFI1238) (Vibrio salmonicida (strain LFI1238)) protein is UPF0231 protein VSAL_I2591.